The sequence spans 150 residues: Putative FAD-linked sulfhydryl oxidase 088R (150 aa).

Positions 24 to 128 (GPFGPSGFGP…VTLQKAICIY (105 aa)) constitute an ERV/ALR sulfhydryl oxidase domain. A disulfide bridge connects residues C74 and C77.

Requires FAD as cofactor.

The catalysed reaction is 2 R'C(R)SH + O2 = R'C(R)S-S(R)CR' + H2O2. Functionally, FAD-dependent sulfhydryl oxidase that catalyzes disulfide bond formation. This chain is Putative FAD-linked sulfhydryl oxidase 088R, found in Dryophytes versicolor (chameleon treefrog).